The following is a 1802-amino-acid chain: Protein TIC 214 (1802 aa).

6 helical membrane-spanning segments follow: residues Ile19 to Gly39, Phe68 to Leu88, Pro91 to His111, Val133 to Leu153, Val176 to Ile196, and Ile227 to Ile247.

This sequence belongs to the TIC214 family. Part of the Tic complex.

The protein resides in the plastid. It localises to the chloroplast inner membrane. In terms of biological role, involved in protein precursor import into chloroplasts. May be part of an intermediate translocation complex acting as a protein-conducting channel at the inner envelope. This is Protein TIC 214 from Nasturtium officinale (Watercress).